Here is a 388-residue protein sequence, read N- to C-terminus: Phosphopentomutase (388 aa).

Mn(2+)-binding residues include Asp-9, Asp-283, His-288, Asp-324, His-325, and His-336.

Belongs to the phosphopentomutase family. The cofactor is Mn(2+).

It localises to the cytoplasm. It catalyses the reaction 2-deoxy-alpha-D-ribose 1-phosphate = 2-deoxy-D-ribose 5-phosphate. It carries out the reaction alpha-D-ribose 1-phosphate = D-ribose 5-phosphate. It participates in carbohydrate degradation; 2-deoxy-D-ribose 1-phosphate degradation; D-glyceraldehyde 3-phosphate and acetaldehyde from 2-deoxy-alpha-D-ribose 1-phosphate: step 1/2. Its function is as follows. Isomerase that catalyzes the conversion of deoxy-ribose 1-phosphate (dRib-1-P) and ribose 1-phosphate (Rib-1-P) to deoxy-ribose 5-phosphate (dRib-5-P) and ribose 5-phosphate (Rib-5-P), respectively. The protein is Phosphopentomutase of Deinococcus radiodurans (strain ATCC 13939 / DSM 20539 / JCM 16871 / CCUG 27074 / LMG 4051 / NBRC 15346 / NCIMB 9279 / VKM B-1422 / R1).